The primary structure comprises 208 residues: MAAAWPAGRASPAAGPPGLLRTLWLVTVAAGHCGAAASGAVGGEETPKCEDLRVGQYICKEPKINDATQEPVNCTNYTAHVQCFPAPKITCKDLSGNETHFTGSEVGFLKPISCRNVNGYSYKVAVALSLFLGWLGADRFYLGYPALGLLKFCTVGFCGIGSLIDFILISMQIVGPSDGSSYIIDYYGTRLTRLSITNETFRKTQLYP.

An N-terminal signal peptide occupies residues 1 to 37; it reads MAAAWPAGRASPAAGPPGLLRTLWLVTVAAGHCGAAA. Residues 38 to 129 lie on the Extracellular side of the membrane; that stretch reads SGAVGGEETP…YSYKVAVALS (92 aa). N-linked (GlcNAc...) asparagine glycosylation is found at N73, N76, and N97. Residues 119–167 enclose the TM2 domain; it reads GYSYKVAVALSLFLGWLGADRFYLGYPALGLLKFCTVGFCGIGSLIDFI. A helical membrane pass occupies residues 130-150; sequence LFLGWLGADRFYLGYPALGLL. The Cytoplasmic portion of the chain corresponds to 151–154; that stretch reads KFCT. Residues 155–175 form a helical membrane-spanning segment; sequence VGFCGIGSLIDFILISMQIVG. The Extracellular portion of the chain corresponds to 176–208; it reads PSDGSSYIIDYYGTRLTRLSITNETFRKTQLYP. The N-linked (GlcNAc...) asparagine glycan is linked to N198.

This sequence belongs to the TM2 family. In terms of assembly, interacts with APP beta-APP42 (amyloid-beta protein 42). N-glycosylated.

It localises to the membrane. In terms of biological role, may participate in amyloid-beta-induced apoptosis via its interaction with beta-APP42. The protein is TM2 domain-containing protein 1 (Tm2d1) of Mus musculus (Mouse).